A 327-amino-acid polypeptide reads, in one-letter code: Peroxidase N (327 aa).

An N-terminal signal peptide occupies residues 1-28; the sequence is MKTQTKVMGGHVLLTVFTLCMLCSAVRA. Pyrrolidone carboxylic acid is present on Gln-29. 4 disulfide bridges follow: Cys-39-Cys-116, Cys-72-Cys-77, Cys-122-Cys-323, and Cys-200-Cys-232. The active-site Proton acceptor is His-70. Ca(2+) is bound by residues Asp-71, Val-74, Gly-76, Asp-78, and Ser-80. A glycan (N-linked (GlcNAc...) asparagine) is linked at Asn-155. Pro-163 provides a ligand contact to substrate. Asn-182 carries an N-linked (GlcNAc...) asparagine glycan. A heme b-binding site is contributed by His-193. Thr-194 contacts Ca(2+). N-linked (GlcNAc...) asparagine glycosylation is found at Asn-209 and Asn-239. Asp-245 provides a ligand contact to Ca(2+). N-linked (GlcNAc...) asparagine glycosylation occurs at Asn-247. Residues Ser-248 and Asp-253 each coordinate Ca(2+). Asn-281 carries N-linked (GlcNAc...) asparagine glycosylation.

This sequence belongs to the peroxidase family. Classical plant (class III) peroxidase subfamily. Ca(2+) serves as cofactor. Requires heme b as cofactor.

The protein localises to the secreted. The enzyme catalyses 2 a phenolic donor + H2O2 = 2 a phenolic radical donor + 2 H2O. Its function is as follows. Removal of H(2)O(2), oxidation of toxic reductants, biosynthesis and degradation of lignin, suberization, auxin catabolism, response to environmental stresses such as wounding, pathogen attack and oxidative stress. These functions might be dependent on each isozyme/isoform in each plant tissue. The polypeptide is Peroxidase N (HRPN) (Armoracia rusticana (Horseradish)).